Here is a 192-residue protein sequence, read N- to C-terminus: MSEYLLLLISTVLVNNFVLVKFLGLCPFMGVSSKLESAIGMSMATTFVLTLASVLSYLVNQYLLLPFELGYLRTMSFILVIAVVVQFTEMLVQKTSASLYRALGIYLPLITTNCAVLGVALLNISEKHNFIESAIYGFGAAVGFSLVLILFSAMRERLAAADVPLPFRGGAIAMITAGLMSLAFMGFTGLVK.

The next 6 membrane-spanning stretches (helical) occupy residues 5–25 (LLLLISTVLVNNFVLVKFLGL), 39–59 (IGMSMATTFVLTLASVLSYLV), 65–85 (LPFELGYLRTMSFILVIAVVV), 102–122 (ALGIYLPLITTNCAVLGVALL), 134–154 (AIYGFGAAVGFSLVLILFSAM), and 171–191 (AIAMITAGLMSLAFMGFTGLV).

The protein belongs to the NqrDE/RnfAE family. In terms of assembly, the complex is composed of six subunits: RnfA, RnfB, RnfC, RnfD, RnfE and RnfG.

It localises to the cell inner membrane. In terms of biological role, part of a membrane-bound complex that couples electron transfer with translocation of ions across the membrane. This is Ion-translocating oxidoreductase complex subunit A from Shewanella sediminis (strain HAW-EB3).